A 94-amino-acid chain; its full sequence is Transcription factor PRE6 (94 aa).

A disordered region spans residues 1–20; it reads MSSRRSSRSRQSGSSRISDD. Residues 6–60 form the bHLH domain; that stretch reads SSRSRQSGSSRISDDQISDLVSKLQHLIPELRRRRSDKVSASKVLQETCNYIRNL.

The protein belongs to the bHLH protein family. In terms of assembly, interacts with HFR1.

The protein resides in the cytoplasm. The protein localises to the nucleus. In terms of biological role, atypical and probable non DNA-binding bHLH transcription factor that regulates light-mediated responses in day light conditions by binding and inhibiting the activity of the bHLH transcription factor HFR1, a critical regulator of light signaling and shade avoidance. Forms non-functional heterodimers with HFR1, causing liberation and activation of PIF4 from the transcriptionally inactive HFR1-PIF4 complex. The protein is Transcription factor PRE6 (PRE6) of Arabidopsis thaliana (Mouse-ear cress).